Reading from the N-terminus, the 393-residue chain is Putative bacilysin exporter BacE (393 aa).

The next 10 membrane-spanning stretches (helical) occupy residues 11 to 31, 43 to 63, 69 to 89, 92 to 112, 133 to 155, 160 to 177, 215 to 235, 244 to 264, 287 to 307, and 353 to 373; these read LLFG…ALLI, SGVI…GVLV, VKIM…LTFL, GEYP…GVFF, LFAK…FLLG, LAVA…FFIS, MFTM…FPIV, IGNF…AALV, ALFL…LFFI, and IVDA…LFLH.

It belongs to the major facilitator superfamily.

The protein resides in the cell membrane. In terms of biological role, part of the bacilysin biosynthesis operon. May be involved in self-resistance to bacilysin by permitting efflux of this antibiotic. The sequence is that of Putative bacilysin exporter BacE (bacE) from Bacillus subtilis.